We begin with the raw amino-acid sequence, 426 residues long: 3-phosphoshikimate 1-carboxyvinyltransferase (426 aa).

Residues K22, S23, and R27 each contribute to the 3-phosphoshikimate site. K22 contributes to the phosphoenolpyruvate binding site. Residues G96 and R124 each coordinate phosphoenolpyruvate. Positions 170, 171, 172, 198, 314, 337, and 341 each coordinate 3-phosphoshikimate. Q172 provides a ligand contact to phosphoenolpyruvate. The active-site Proton acceptor is the D314. Phosphoenolpyruvate contacts are provided by R345, R387, and K412.

It belongs to the EPSP synthase family. In terms of assembly, monomer.

Its subcellular location is the cytoplasm. The catalysed reaction is 3-phosphoshikimate + phosphoenolpyruvate = 5-O-(1-carboxyvinyl)-3-phosphoshikimate + phosphate. It participates in metabolic intermediate biosynthesis; chorismate biosynthesis; chorismate from D-erythrose 4-phosphate and phosphoenolpyruvate: step 6/7. Catalyzes the transfer of the enolpyruvyl moiety of phosphoenolpyruvate (PEP) to the 5-hydroxyl of shikimate-3-phosphate (S3P) to produce enolpyruvyl shikimate-3-phosphate and inorganic phosphate. This Aliivibrio fischeri (strain ATCC 700601 / ES114) (Vibrio fischeri) protein is 3-phosphoshikimate 1-carboxyvinyltransferase.